The sequence spans 492 residues: GMP reductase (492 aa).

Residues 30-31 (SR) and arginine 78 each bind NADP(+). CBS domains are found at residues 99 to 162 (LIED…LVET) and 164 to 223 (MTPV…LNAT). NADP(+) is bound by residues 260–262 (DIA) and 313–314 (VG). The K(+) site is built by glycine 314, glycine 316, and cysteine 319. Cysteine 319 (thioimidate intermediate) is an active-site residue. The Proton donor/acceptor role is filled by threonine 321. Arginine 322 contacts K(+). GMP-binding positions include 352–354 (DGG), 375–376 (GN), and 401–403 (GMA). NADP(+) contacts are provided by residues methionine 402 and 454–457 (SGIS). Positions 490-492 (SKL) match the Microbody targeting signal motif.

This sequence belongs to the IMPDH/GMPR family. GuaC type 1 subfamily. As to quaternary structure, homotetramer.

It localises to the glycosome. It catalyses the reaction IMP + NH4(+) + NADP(+) = GMP + NADPH + 2 H(+). With respect to regulation, activated by GTP and inhibited by ATP and IMP. Mycophenolic acid (MPA) is a competitive inhibitor of the enzyme with respect to NADPH. Its function is as follows. Catalyzes the irreversible NADPH-dependent deamination of GMP to IMP. It functions in the conversion of nucleobase, nucleoside and nucleotide derivatives of G to A nucleotides, and in maintaining the intracellular balance of A and G nucleotides. The protein is GMP reductase of Leishmania major.